A 252-amino-acid chain; its full sequence is Flap endonuclease Xni (252 aa).

Asp105 contacts Mg(2+). In terms of domain architecture, 5'-3' exonuclease spans 161 to 251 (VESTQFIDYL…NVNLKQFRIE (91 aa)). The K(+) site is built by Leu172, Ala173, Pro181, Val183, and Ile186. The tract at residues 185-190 (GIGPKS) is interaction with DNA.

This sequence belongs to the Xni family. The cofactor is Mg(2+). Requires K(+) as cofactor.

Functionally, has flap endonuclease activity. During DNA replication, flap endonucleases cleave the 5'-overhanging flap structure that is generated by displacement synthesis when DNA polymerase encounters the 5'-end of a downstream Okazaki fragment. The polypeptide is Flap endonuclease Xni (Shewanella halifaxensis (strain HAW-EB4)).